We begin with the raw amino-acid sequence, 443 residues long: ATP-dependent protease ATPase subunit HslU (443 aa).

Residues Val18, 60-65 (GVGKTE), Asp256, Glu321, and Arg393 contribute to the ATP site.

It belongs to the ClpX chaperone family. HslU subfamily. A double ring-shaped homohexamer of HslV is capped on each side by a ring-shaped HslU homohexamer. The assembly of the HslU/HslV complex is dependent on binding of ATP.

The protein resides in the cytoplasm. Functionally, ATPase subunit of a proteasome-like degradation complex; this subunit has chaperone activity. The binding of ATP and its subsequent hydrolysis by HslU are essential for unfolding of protein substrates subsequently hydrolyzed by HslV. HslU recognizes the N-terminal part of its protein substrates and unfolds these before they are guided to HslV for hydrolysis. The sequence is that of ATP-dependent protease ATPase subunit HslU from Azoarcus sp. (strain BH72).